A 683-amino-acid polypeptide reads, in one-letter code: Phosphomethylpyrimidine synthase (683 aa).

Substrate-binding positions include N235, M264, Y293, H329, 349-351, 390-393, and E429; these read SRG and DGMR. Residue H433 coordinates Zn(2+). Residue Y456 participates in substrate binding. Zn(2+) is bound at residue H497. Residues C577, C580, and C585 each contribute to the [4Fe-4S] cluster site. Positions 647–683 are disordered; it reads RQSPGVESTSLESTSLESTVLESTSLESTALEKAKEV. Positions 653 to 675 are enriched in low complexity; that stretch reads ESTSLESTSLESTVLESTSLEST.

This sequence belongs to the ThiC family. In terms of assembly, homodimer. It depends on [4Fe-4S] cluster as a cofactor.

It carries out the reaction 5-amino-1-(5-phospho-beta-D-ribosyl)imidazole + S-adenosyl-L-methionine = 4-amino-2-methyl-5-(phosphooxymethyl)pyrimidine + CO + 5'-deoxyadenosine + formate + L-methionine + 3 H(+). Its pathway is cofactor biosynthesis; thiamine diphosphate biosynthesis. In terms of biological role, catalyzes the synthesis of the hydroxymethylpyrimidine phosphate (HMP-P) moiety of thiamine from aminoimidazole ribotide (AIR) in a radical S-adenosyl-L-methionine (SAM)-dependent reaction. This chain is Phosphomethylpyrimidine synthase, found in Shewanella loihica (strain ATCC BAA-1088 / PV-4).